Reading from the N-terminus, the 122-residue chain is Large ribosomal subunit protein uL14 (122 aa).

The protein belongs to the universal ribosomal protein uL14 family. As to quaternary structure, part of the 50S ribosomal subunit. Forms a cluster with proteins L3 and L19. In the 70S ribosome, L14 and L19 interact and together make contacts with the 16S rRNA in bridges B5 and B8.

Binds to 23S rRNA. Forms part of two intersubunit bridges in the 70S ribosome. This is Large ribosomal subunit protein uL14 from Syntrophus aciditrophicus (strain SB).